A 438-amino-acid polypeptide reads, in one-letter code: UDP-glycosyltransferase 84B2 (438 aa).

UDP-alpha-D-glucose contacts are provided by residues S260, 314-316 (GQQ), 331-339 (HCGWNSTIE), and 353-356 (WIDQ).

This sequence belongs to the UDP-glycosyltransferase family.

This Arabidopsis thaliana (Mouse-ear cress) protein is UDP-glycosyltransferase 84B2 (UGT84B2).